A 191-amino-acid chain; its full sequence is MTVKIGVLALQGAVSEHIKALKDSGAETIAVKDASQLEELDGLVLPGGESTTMRRLMDKYGLFDAIKIFAKKKAIFGTCAGLILMAKEIEGRKGPHLGLLDIDVKRNAFGSQVDSFESDLKIDHVAESFDGVFIRAPYIKKVGPGVEILSTYNQHIVACRQGRFLACAFHPELTGDTRFHEYFVKITKENK.

L-glutamine is bound at residue 48–50; it reads GES. The active-site Nucleophile is the C79. L-glutamine is bound by residues R106 and 134-135; that span reads IR. Catalysis depends on charge relay system residues H170 and E172.

It belongs to the glutaminase PdxT/SNO family. As to quaternary structure, in the presence of PdxS, forms a dodecamer of heterodimers. Only shows activity in the heterodimer.

It carries out the reaction aldehydo-D-ribose 5-phosphate + D-glyceraldehyde 3-phosphate + L-glutamine = pyridoxal 5'-phosphate + L-glutamate + phosphate + 3 H2O + H(+). The catalysed reaction is L-glutamine + H2O = L-glutamate + NH4(+). It functions in the pathway cofactor biosynthesis; pyridoxal 5'-phosphate biosynthesis. Catalyzes the hydrolysis of glutamine to glutamate and ammonia as part of the biosynthesis of pyridoxal 5'-phosphate. The resulting ammonia molecule is channeled to the active site of PdxS. The chain is Pyridoxal 5'-phosphate synthase subunit PdxT from Oenococcus oeni (strain ATCC BAA-331 / PSU-1).